A 223-amino-acid polypeptide reads, in one-letter code: Octanoyltransferase (223 aa).

Residues 31-216 (GQIGDTLLLL…QIGEVFALEP (186 aa)) enclose the BPL/LPL catalytic domain. Residues 76-83 (RGGEVTYH), 145-147 (AIG), and 159-161 (GLA) contribute to the substrate site. The active-site Acyl-thioester intermediate is the cysteine 177.

This sequence belongs to the LipB family.

The protein resides in the cytoplasm. It catalyses the reaction octanoyl-[ACP] + L-lysyl-[protein] = N(6)-octanoyl-L-lysyl-[protein] + holo-[ACP] + H(+). It functions in the pathway protein modification; protein lipoylation via endogenous pathway; protein N(6)-(lipoyl)lysine from octanoyl-[acyl-carrier-protein]: step 1/2. Functionally, catalyzes the transfer of endogenously produced octanoic acid from octanoyl-acyl-carrier-protein onto the lipoyl domains of lipoate-dependent enzymes. Lipoyl-ACP can also act as a substrate although octanoyl-ACP is likely to be the physiological substrate. This Chloroflexus aurantiacus (strain ATCC 29366 / DSM 635 / J-10-fl) protein is Octanoyltransferase.